The chain runs to 142 residues: Large ribosomal subunit protein uL11 (142 aa).

The protein belongs to the universal ribosomal protein uL11 family. As to quaternary structure, part of the ribosomal stalk of the 50S ribosomal subunit. Interacts with L10 and the large rRNA to form the base of the stalk. L10 forms an elongated spine to which L12 dimers bind in a sequential fashion forming a multimeric L10(L12)X complex. Post-translationally, one or more lysine residues are methylated.

Its function is as follows. Forms part of the ribosomal stalk which helps the ribosome interact with GTP-bound translation factors. This Xylella fastidiosa (strain Temecula1 / ATCC 700964) protein is Large ribosomal subunit protein uL11.